The chain runs to 305 residues: MVTISDVANLLSRNTINYSIIDYPEKKKSIDIITEEQNDKRRILVLKINNSTSDRRNFRILFDLKKISEVTESLPLIIDDNIEDDVVSEKDGVFSMNLYTLERSLRGEKIFLLKTRGGIFVRVDSKKLREKREEKNMSLGELSQRLGVSRISVYDYEKEDSYVSIEVAEKLIEIFGDEVIGDIIKDYDSNTKKKKELQSDYNEEVKILEKLDRVLSDANYKTVKFNFTAIDMAAIKGSEKLIFCTEVNTLANSLKKFNEANKIASKINAKLLVIAKSSKTSKVYEKENFNVYIYNDIDKVVDESS.

Residues 128–183 (LREKREEKNMSLGELSQRLGVSRISVYDYEKEDSYVSIEVAEKLIEIFGDEVIGDI) enclose the HTH cro/C1-type domain. The segment at residues 139-158 (LGELSQRLGVSRISVYDYEK) is a DNA-binding region (H-T-H motif).

The polypeptide is Putative HTH-type transcriptional regulatory protein Saci_1344 (Sulfolobus acidocaldarius (strain ATCC 33909 / DSM 639 / JCM 8929 / NBRC 15157 / NCIMB 11770)).